The primary structure comprises 115 residues: Evasin P1181 (115 aa).

Residues 1–25 (MALNWSFRVIFVSAMWCALLKFATL) form the signal peptide. 4 disulfides stabilise this stretch: cysteine 38–cysteine 58, cysteine 54–cysteine 94, cysteine 70–cysteine 99, and cysteine 89–cysteine 108. 3 N-linked (GlcNAc...) asparagine glycosylation sites follow: asparagine 45, asparagine 72, and asparagine 103.

The protein resides in the secreted. Its function is as follows. Salivary chemokine-binding protein which binds to host chemokines CCL3 and CCL4. The protein is Evasin P1181 of Amblyomma maculatum (Gulf Coast tick).